Reading from the N-terminus, the 309-residue chain is Porphobilinogen deaminase (309 aa).

Cys241 carries the S-(dipyrrolylmethanemethyl)cysteine modification.

It belongs to the HMBS family. As to quaternary structure, monomer. Requires dipyrromethane as cofactor.

It catalyses the reaction 4 porphobilinogen + H2O = hydroxymethylbilane + 4 NH4(+). It participates in porphyrin-containing compound metabolism; protoporphyrin-IX biosynthesis; coproporphyrinogen-III from 5-aminolevulinate: step 2/4. Tetrapolymerization of the monopyrrole PBG into the hydroxymethylbilane pre-uroporphyrinogen in several discrete steps. This Bacillus cereus (strain G9842) protein is Porphobilinogen deaminase.